Reading from the N-terminus, the 170-residue chain is Ribosome maturation factor RimM (170 aa).

The 74-residue stretch at 96 to 169 folds into the PRC barrel domain; sequence EGEFYACDVE…VVQLATLEGL (74 aa).

It belongs to the RimM family. In terms of assembly, binds ribosomal protein uS19.

It is found in the cytoplasm. Functionally, an accessory protein needed during the final step in the assembly of 30S ribosomal subunit, possibly for assembly of the head region. Essential for efficient processing of 16S rRNA. May be needed both before and after RbfA during the maturation of 16S rRNA. It has affinity for free ribosomal 30S subunits but not for 70S ribosomes. In Sorangium cellulosum (strain So ce56) (Polyangium cellulosum (strain So ce56)), this protein is Ribosome maturation factor RimM.